The primary structure comprises 272 residues: TIP41-like protein (272 aa).

K106 is subject to N6-acetyllysine. Positions 173–272 are interaction with PPP2CA; sequence RVMPSSFFLL…ADSQKSTQVE (100 aa). S265 carries the post-translational modification Phosphoserine.

The protein belongs to the TIP41 family. In terms of assembly, isoform 1 interacts with PPP2CA. Isoform 2 does not interact with PPP2CA. Interacts with PPP2CB, PPP4C and PPP6C. Interacts with IGBP1; the interaction is dependent on PPP2CA. Associates with a protein phosphatase 2A PP2A(C):IGBP1 complex. Interacts with PPP4C and PPP4R2.

The protein resides in the cytoplasm. May be a allosteric regulator of serine/threonine-protein phosphatase 2A (PP2A). Isoform 1 inhibits catalytic activity of the PP2A(D) core complex in vitro. The PP2A(C):TIPRL complex does not show phosphatase activity. Acts as a negative regulator of serine/threonine-protein phosphatase 4 probably by inhibiting the formation of the active PPP4C:PPP4R2 complex; the function is proposed to implicate it in DNA damage response by promoting H2AX phosphorylated on Ser-140 (gamma-H2AX). May play a role in the regulation of ATM/ATR signaling pathway controlling DNA replication and repair. In Homo sapiens (Human), this protein is TIP41-like protein (TIPRL).